The sequence spans 205 residues: Probable GTP-binding protein EngB (205 aa).

One can recognise an EngB-type G domain in the interval 29-203; that stretch reads QGAEIAFIGR…KAVLSQWFSS (175 aa). Residues 37 to 44, 64 to 68, 82 to 85, 149 to 152, and 182 to 184 contribute to the GTP site; these read GRSNAGKS, GRTQM, DLPG, TKSD, and FSS. 2 residues coordinate Mg(2+): Ser44 and Thr66.

The protein belongs to the TRAFAC class TrmE-Era-EngA-EngB-Septin-like GTPase superfamily. EngB GTPase family. The cofactor is Mg(2+).

In terms of biological role, necessary for normal cell division and for the maintenance of normal septation. This is Probable GTP-binding protein EngB from Coxiella burnetii (strain CbuK_Q154) (Coxiella burnetii (strain Q154)).